Consider the following 277-residue polypeptide: Sulfur carrier protein FdhD (277 aa).

The active-site Cysteine persulfide intermediate is Cys-121. 260 to 265 contacts Mo-bis(molybdopterin guanine dinucleotide); sequence FCKPGR.

It belongs to the FdhD family.

It is found in the cytoplasm. Required for formate dehydrogenase (FDH) activity. Acts as a sulfur carrier protein that transfers sulfur from IscS to the molybdenum cofactor prior to its insertion into FDH. The sequence is that of Sulfur carrier protein FdhD from Escherichia coli O6:K15:H31 (strain 536 / UPEC).